The chain runs to 362 residues: tRNA-specific 2-thiouridylase MnmA (362 aa).

ATP is bound by residues 8–15 (AMSGGVDS) and Met-35. An interaction with target base in tRNA region spans residues 95–97 (NPD). The active-site Nucleophile is the Cys-100. Cys-100 and Cys-196 are joined by a disulfide. ATP is bound at residue Gly-124. The interval 146–148 (KDQ) is interaction with tRNA. Residue Cys-196 is the Cysteine persulfide intermediate of the active site. Residues 303–304 (RY) form an interaction with tRNA region.

The protein belongs to the MnmA/TRMU family.

The protein resides in the cytoplasm. The enzyme catalyses S-sulfanyl-L-cysteinyl-[protein] + uridine(34) in tRNA + AH2 + ATP = 2-thiouridine(34) in tRNA + L-cysteinyl-[protein] + A + AMP + diphosphate + H(+). Its function is as follows. Catalyzes the 2-thiolation of uridine at the wobble position (U34) of tRNA, leading to the formation of s(2)U34. This chain is tRNA-specific 2-thiouridylase MnmA, found in Chlamydia abortus (strain DSM 27085 / S26/3) (Chlamydophila abortus).